Reading from the N-terminus, the 177-residue chain is Zinc metalloproteinase-disintegrin-like scutiarin (177 aa).

Residues 1–63 (NPCCDAATCK…ECPADVFHKN (63 aa)) form the Disintegrin domain. 10 cysteine pairs are disulfide-bonded: C3–C26, C17–C23, C22–C48, C35–C55, C42–C74, C67–C79, C86–C136, C101–C147, C114–C124, and C131–C173. A D/ECD-tripeptide motif is present at residues 41-43 (ECD). 5 residues coordinate Ca(2+): D43, P44, E46, D58, and V59.

The protein belongs to the venom metalloproteinase (M12B) family. P-III subfamily. P-IIIa sub-subfamily. In terms of assembly, monomer. The cofactor is Zn(2+). Glycosylated. In terms of tissue distribution, expressed by the venom gland.

The protein localises to the secreted. Its function is as follows. Snake venom metalloproteinase that impairs hemostasis in the envenomed animal. The chain is Zinc metalloproteinase-disintegrin-like scutiarin from Crotalus scutulatus scutulatus (Mojave rattlesnake).